A 453-amino-acid polypeptide reads, in one-letter code: Ethanolamine ammonia-lyase large subunit (453 aa).

Residues 160–162 (RLQ) and N193 contribute to the substrate site. Adenosylcob(III)alamin contacts are provided by P194 and Q246. E287 contacts substrate. S295 serves as a coordination point for adenosylcob(III)alamin. Residue D362 coordinates substrate. M401 is an adenosylcob(III)alamin binding site.

This sequence belongs to the EutB family. The basic unit is a heterodimer which dimerizes to form tetramers. The heterotetramers trimerize; 6 large subunits form a core ring with 6 small subunits projecting outwards. Adenosylcob(III)alamin serves as cofactor.

The protein localises to the bacterial microcompartment. It catalyses the reaction ethanolamine = acetaldehyde + NH4(+). The protein operates within amine and polyamine degradation; ethanolamine degradation. In terms of biological role, catalyzes the deamination of various vicinal amino-alcohols to oxo compounds. Allows this organism to utilize ethanolamine as the sole source of nitrogen and carbon in the presence of vitamin B12. In Escherichia coli O157:H7, this protein is Ethanolamine ammonia-lyase large subunit.